We begin with the raw amino-acid sequence, 1905 residues long: Low-density lipoprotein receptor-related protein 4 (1905 aa).

Residues 1–20 form the signal peptide; sequence MRRWWGALLLGALLCAHGTA. At 21 to 1723 the chain is on the extracellular side; that stretch reads SNLECACGRS…VPAAPGEGLH (1703 aa). 8 consecutive LDL-receptor class A domains span residues 26–67, 70–106, 109–144, 147–183, 190–226, 230–266, 269–305, and 311–350; these read ACGR…DGCT, TCSP…QDCP, ECEE…EQCD, KCSD…ESCP, PCNL…SDCS, PCRS…RNCT, MCTA…ENCE, and QCAS…QNCR. 30 disulfides stabilise this stretch: Cys27/Cys44, Cys34/Cys57, Cys51/Cys66, Cys71/Cys83, Cys78/Cys96, Cys90/Cys105, Cys110/Cys122, Cys117/Cys135, Cys129/Cys143, Cys148/Cys160, Cys155/Cys173, Cys167/Cys182, Cys191/Cys203, Cys198/Cys216, Cys210/Cys225, Cys231/Cys243, Cys238/Cys256, Cys250/Cys265, Cys270/Cys282, Cys277/Cys295, Cys289/Cys304, Cys312/Cys324, Cys319/Cys337, Cys331/Cys349, Cys358/Cys369, Cys365/Cys378, Cys380/Cys393, Cys399/Cys409, Cys405/Cys418, and Cys420/Cys433. Residue Asn264 is glycosylated (N-linked (GlcNAc...) asparagine). The region spanning 354–394 is the EGF-like 1; atypical domain; the sequence is GEENCNVNNGGCAQKCQMIRGAVQCTCHTGYRLTEDGRTCQ. Residues 395–434 enclose the EGF-like 2; calcium-binding domain; the sequence is DVNECAEEGYCSQGCTNSEGAFQCWCEAGYELRPDRRSCK. 5 LDL-receptor class B repeats span residues 480 to 522, 523 to 565, 566 to 609, 610 to 652, and 653 to 693; these read ELVF…DWVH, DKLY…HPME, GTIY…DYAG, RRMY…FEDS, and LYWT…LHPQ. Residue Asn498 is glycosylated (N-linked (GlcNAc...) asparagine). The 40-residue stretch at 698 to 737 folds into the EGF-like 3 domain; that stretch reads GKNRCGDNNGGCTHLCLPSGQNYTCACPTGFRKINSHACA. 3 disulfides stabilise this stretch: Cys702-Cys713, Cys709-Cys722, and Cys724-Cys736. A glycan (N-linked (GlcNAc...) asparagine) is linked at Asn719. LDL-receptor class B repeat units lie at residues 785-827, 828-870, 871-914, 915-956, and 957-998; these read DHVY…DWVT, NKLY…EPMG, GYMY…DYGS, QRLY…LYGQ, and RIYW…FHRQ. Residue Asn901 is glycosylated (N-linked (GlcNAc...) asparagine). Asn1077 carries N-linked (GlcNAc...) asparagine glycosylation. LDL-receptor class B repeat units follow at residues 1093-1135, 1136-1178, 1179-1222, 1223-1263, 1264-1306, 1397-1439, 1440-1482, 1483-1526, 1527-1568, and 1569-1610; these read GKVY…DAIG, RKVY…YHEM, GFMY…DKTS, SQLL…LLDS, YIYW…DRAQ, GKVY…DWVA, RNLY…FPRK, GYLF…DYDT, RRIY…QDRW, and IYWT…SPQR. N-linked (GlcNAc...) asparagine glycans are attached at residues Asn1415 and Asn1467. A disordered region spans residues 1659-1696; that stretch reads PRATSLNEKSPVLPNTLPTTLHSSTTRTRTSPEGAEGR. Low complexity predominate over residues 1671–1690; the sequence is LPNTLPTTLHSSTTRTRTSP. The helical transmembrane segment at 1724-1746 threads the bilayer; sequence VSYAVGGLLSVLLILLVTAALML. Topologically, residues 1747–1905 are cytoplasmic; sequence YRHRKSKFTD…ERKLSSESQV (159 aa). The segment at 1853–1905 is disordered; that stretch reads SSGSLDDTETEQLLQEEQSECSSVHTATTPERRGSLPDTGWKHERKLSSESQV. The span at 1872–1881 shows a compositional bias: polar residues; sequence ECSSVHTATT. Basic and acidic residues predominate over residues 1882–1905; sequence PERRGSLPDTGWKHERKLSSESQV.

This sequence belongs to the LDLR family. Homooligomer. Interacts with MUSK; the heterodimer forms an AGRIN receptor complex that binds AGRIN resulting in activation of MUSK. Interacts (via the extracellular domain) with SOST; the interaction facilitates the inhibition of Wnt signaling. Interacts with MESD; the interaction promotes glycosylation of LRP4 and its cell-surface expression. In terms of processing, N-glycosylation is required for cell surface location. Expressed in different regions of the brain, mainly in the olfactory bulb, at lower level in the cerebral cortex and hippocampus.

The protein localises to the cell membrane. Mediates SOST-dependent inhibition of bone formation. Functions as a specific facilitator of SOST-mediated inhibition of Wnt signaling. Plays a key role in the formation and the maintenance of the neuromuscular junction (NMJ), the synapse between motor neuron and skeletal muscle. Directly binds AGRIN and recruits it to the MUSK signaling complex. Mediates the AGRIN-induced phosphorylation of MUSK, the kinase of the complex. The activation of MUSK in myotubes induces the formation of NMJ by regulating different processes including the transcription of specific genes and the clustering of AChR in the postsynaptic membrane. Alternatively, may be involved in the negative regulation of the canonical Wnt signaling pathway, being able to antagonize the LRP6-mediated activation of this pathway. More generally, has been proposed to function as a cell surface endocytic receptor binding and internalizing extracellular ligands for degradation by lysosomes. Plays an essential role in the process of digit differentiation. In Rattus norvegicus (Rat), this protein is Low-density lipoprotein receptor-related protein 4 (Lrp4).